Consider the following 152-residue polypeptide: uncharacterized protein (152 aa).

The next 3 helical transmembrane spans lie at 15–35, 43–63, and 117–137; these read IINVFVSFGFNLILGILIYDI, LVVACILIAMPIIAFLILILT, and TFLLLLIAFLAFGLIFTKLLI.

The protein to M.jannaschii MJ0129 and MJ0587.

It is found in the cell membrane. This is an uncharacterized protein from Methanocaldococcus jannaschii (strain ATCC 43067 / DSM 2661 / JAL-1 / JCM 10045 / NBRC 100440) (Methanococcus jannaschii).